The primary structure comprises 529 residues: Bifunctional purine biosynthesis protein PurH (529 aa).

Residues 2 to 148 (QQLRPIHRAL…KNHKDVAIVV (147 aa)) form the MGS-like domain.

It belongs to the PurH family.

The catalysed reaction is (6R)-10-formyltetrahydrofolate + 5-amino-1-(5-phospho-beta-D-ribosyl)imidazole-4-carboxamide = 5-formamido-1-(5-phospho-D-ribosyl)imidazole-4-carboxamide + (6S)-5,6,7,8-tetrahydrofolate. The enzyme catalyses IMP + H2O = 5-formamido-1-(5-phospho-D-ribosyl)imidazole-4-carboxamide. It functions in the pathway purine metabolism; IMP biosynthesis via de novo pathway; 5-formamido-1-(5-phospho-D-ribosyl)imidazole-4-carboxamide from 5-amino-1-(5-phospho-D-ribosyl)imidazole-4-carboxamide (10-formyl THF route): step 1/1. The protein operates within purine metabolism; IMP biosynthesis via de novo pathway; IMP from 5-formamido-1-(5-phospho-D-ribosyl)imidazole-4-carboxamide: step 1/1. This chain is Bifunctional purine biosynthesis protein PurH, found in Photorhabdus laumondii subsp. laumondii (strain DSM 15139 / CIP 105565 / TT01) (Photorhabdus luminescens subsp. laumondii).